The sequence spans 115 residues: U3-lycotoxin-Ls1k (115 aa).

An N-terminal signal peptide occupies residues M1–A20. Positions E21–R44 are excised as a propeptide. 4 disulfides stabilise this stretch: C48/C63, C55/C72, C62/C87, and C74/C85.

Belongs to the neurotoxin 19 (CSTX) family. 01 subfamily. In terms of tissue distribution, expressed by the venom gland.

The protein resides in the secreted. This chain is U3-lycotoxin-Ls1k, found in Lycosa singoriensis (Wolf spider).